The chain runs to 401 residues: Mannonate dehydratase (401 aa).

The protein belongs to the mannonate dehydratase family. It depends on Fe(2+) as a cofactor. Mn(2+) is required as a cofactor.

The enzyme catalyses D-mannonate = 2-dehydro-3-deoxy-D-gluconate + H2O. It functions in the pathway carbohydrate metabolism; pentose and glucuronate interconversion. Functionally, catalyzes the dehydration of D-mannonate. In Brucella melitensis biotype 2 (strain ATCC 23457), this protein is Mannonate dehydratase.